Here is a 364-residue protein sequence, read N- to C-terminus: NF-kappa-B inhibitor epsilon (364 aa).

The interval 1 to 108 is disordered; it reads MSDARKGPDE…GSPLPPAGVL (108 aa). Serine 18 bears the Phosphoserine mark. Low complexity predominate over residues 36–48; the sequence is PGSGSSQSGCPQP. Over residues 51–70 the composition is skewed to basic and acidic residues; the sequence is HAPETHKEPEKEDADGERAD. The span at 93–104 shows a compositional bias: pro residues; the sequence is PSPPAPGSPLPP. 6 ANK repeats span residues 122–155, 157–186, 190–219, 233–262, 267–296, and 300–329; these read DGDT…DIQN, LYQT…SRIL, HGDT…EPGR, QGLA…DIDV, SGKT…RVDA, and NGCT…DSLL.

This sequence belongs to the NF-kappa-B inhibitor family. Interacts with RELA, REL, NFKB1 nuclear factor NF-kappa-B p50 subunit and NFKB2 nuclear factor NF-kappa-B p52 subunit. Interacts with HNRNPA2B1; the interaction may be mediated by the RRM2 domain of HNRNPA2B1, and HNRNPA2B1 may interact simultaneously with FAM76B and either NFKBIA or NFKBIE to form a complex. Serine phosphorylated; followed by proteasome-dependent degradation.

The protein localises to the cytoplasm. In terms of biological role, sequesters NF-kappa-B transcription factor complexes in the cytoplasm, thereby inhibiting their activity. Sequestered complexes include NFKB1/p50-RELA/p65 and NFKB1/p50-REL/c-Rel complexes. Limits B-cell activation in response to pathogens, and also plays an important role in B-cell development. This is NF-kappa-B inhibitor epsilon (Nfkbie) from Mus musculus (Mouse).